The following is a 978-amino-acid chain: Translation initiation factor IF-2 (978 aa).

2 disordered regions span residues 107 to 129 and 146 to 387; these read AEAP…NLEL and QEEE…HRVQ. Over residues 146-169 the composition is skewed to basic and acidic residues; sequence QEEELSERRRQREEQEARSREASE. The span at 170-186 shows a compositional bias: low complexity; that stretch reads KAAAVAAEAAEAAAAQA. The span at 215–259 shows a compositional bias: basic and acidic residues; that stretch reads AEKEQHLAKEKGLAREKELAESKARAAEDVVRAADLGDRRRKAES. Composition is skewed to low complexity over residues 295-326 and 349-361; these read KPAA…AGAG and PTRG…GAGR. A compositionally biased stretch (basic and acidic residues) spans 375–386; the sequence is GSSDRDRDDHRV. The tr-type G domain occupies 478 to 647; that stretch reads PRAPVVTVMG…LLQAEVLELK (170 aa). A G1 region spans residues 487–494; sequence GHVDHGKT. A GTP-binding site is contributed by 487-494; that stretch reads GHVDHGKT. The interval 512-516 is G2; the sequence is GITQH. Residues 533–536 are G3; that stretch reads DTPG. Residues 533-537 and 587-590 each bind GTP; these read DTPGH and NKID. Residues 587–590 are G4; that stretch reads NKID. Residues 623–625 are G5; the sequence is SAK.

Belongs to the TRAFAC class translation factor GTPase superfamily. Classic translation factor GTPase family. IF-2 subfamily.

Its subcellular location is the cytoplasm. Its function is as follows. One of the essential components for the initiation of protein synthesis. Protects formylmethionyl-tRNA from spontaneous hydrolysis and promotes its binding to the 30S ribosomal subunits. Also involved in the hydrolysis of GTP during the formation of the 70S ribosomal complex. The polypeptide is Translation initiation factor IF-2 (Albidiferax ferrireducens (strain ATCC BAA-621 / DSM 15236 / T118) (Rhodoferax ferrireducens)).